Reading from the N-terminus, the 512-residue chain is Protein OS-9 homolog (512 aa).

A signal peptide spans 1-17; that stretch reads MRRFNLILLASLQLVGA. The disordered stretch occupies residues 71–91; that stretch reads QAREADARDNEAENKDQDGPS. The span at 73 to 88 shows a compositional bias: basic and acidic residues; the sequence is READARDNEAENKDQD. N-linked (GlcNAc...) asparagine glycosylation occurs at asparagine 118. The MRH domain occupies 149-288; sequence DSCLYFMSGW…VVNTPRLCND (140 aa). Cysteine 151 and cysteine 164 are joined by a disulfide. A mannooligosaccharide derivative-binding residues include tryptophan 158, tryptophan 159, glutamine 171, aspartate 242, arginine 248, glutamate 270, and tyrosine 276. Intrachain disulfides connect cysteine 241/cysteine 274 and cysteine 256/cysteine 286. Disordered regions lie at residues 329-349 and 485-512; these read QVPL…PRDV and AAAK…KDEL. Over residues 492-504 the composition is skewed to acidic residues; it reads DDEEEVVEGSEEQ. A Prevents secretion from ER motif is present at residues 509–512; that stretch reads KDEL.

The protein belongs to the OS-9 family. In terms of assembly, interacts with missfolded ER lumenal proteins.

The protein localises to the endoplasmic reticulum membrane. Functionally, lectin involved in the quality control of the secretory pathway. As a member of the endoplasmic reticulum-associated degradation lumenal (ERAD-L) surveillance system, targets misfolded endoplasmic reticulum lumenal glycoproteins for degradation. The protein is Protein OS-9 homolog (YOS1) of Gibberella zeae (strain ATCC MYA-4620 / CBS 123657 / FGSC 9075 / NRRL 31084 / PH-1) (Wheat head blight fungus).